We begin with the raw amino-acid sequence, 314 residues long: tRNA pseudouridine synthase B (314 aa).

His-43 lines the substrate pocket. Catalysis depends on Asp-48, which acts as the Nucleophile. Substrate is bound by residues Tyr-76, Tyr-179, and Leu-200.

The protein belongs to the pseudouridine synthase TruB family. Type 1 subfamily.

The enzyme catalyses uridine(55) in tRNA = pseudouridine(55) in tRNA. Responsible for synthesis of pseudouridine from uracil-55 in the psi GC loop of transfer RNAs. This chain is tRNA pseudouridine synthase B, found in Salmonella paratyphi B (strain ATCC BAA-1250 / SPB7).